Here is a 421-residue protein sequence, read N- to C-terminus: UDP-N-acetylglucosamine 1-carboxyvinyltransferase (421 aa).

Residue 22-23 coordinates phosphoenolpyruvate; the sequence is KN. Arginine 93 contributes to the UDP-N-acetyl-alpha-D-glucosamine binding site. The Proton donor role is filled by cysteine 117. Cysteine 117 bears the 2-(S-cysteinyl)pyruvic acid O-phosphothioketal mark. UDP-N-acetyl-alpha-D-glucosamine-binding positions include 122-126, aspartate 308, and leucine 330; that span reads RPVDL.

Belongs to the EPSP synthase family. MurA subfamily.

The protein resides in the cytoplasm. It catalyses the reaction phosphoenolpyruvate + UDP-N-acetyl-alpha-D-glucosamine = UDP-N-acetyl-3-O-(1-carboxyvinyl)-alpha-D-glucosamine + phosphate. It participates in cell wall biogenesis; peptidoglycan biosynthesis. In terms of biological role, cell wall formation. Adds enolpyruvyl to UDP-N-acetylglucosamine. This Wolinella succinogenes (strain ATCC 29543 / DSM 1740 / CCUG 13145 / JCM 31913 / LMG 7466 / NCTC 11488 / FDC 602W) (Vibrio succinogenes) protein is UDP-N-acetylglucosamine 1-carboxyvinyltransferase.